The sequence spans 289 residues: Cyclin-dependent kinase 2 homolog (289 aa).

One can recognise a Protein kinase domain in the interval 4–285; sequence YHGLEKIGEG…AKQAIEHPYF (282 aa). ATP-binding positions include 10–18 and Lys-32; that span reads IGEGTYGVV. Thr-14 carries the post-translational modification Phosphothreonine. A Phosphotyrosine modification is found at Tyr-15. Asp-126 functions as the Proton acceptor in the catalytic mechanism. Thr-159 carries the post-translational modification Phosphothreonine.

This sequence belongs to the protein kinase superfamily. CMGC Ser/Thr protein kinase family. CDC2/CDKX subfamily. In terms of assembly, may form a complex composed of at least the catalytic subunit CRK2 and a cyclin. Mg(2+) is required as a cofactor.

It localises to the cytoplasm. The enzyme catalyses L-seryl-[protein] + ATP = O-phospho-L-seryl-[protein] + ADP + H(+). It catalyses the reaction L-threonyl-[protein] + ATP = O-phospho-L-threonyl-[protein] + ADP + H(+). The catalysed reaction is [DNA-directed RNA polymerase] + ATP = phospho-[DNA-directed RNA polymerase] + ADP + H(+). With respect to regulation, phosphorylation at Thr-14 or Tyr-15 inactivates the enzyme, while phosphorylation at Thr-159 activates it. In terms of biological role, serine/threonine-protein kinase. Involved in the control of the cell cycle. Required for entry into S-phase and mitosis. Probable component of the kinase complex that phosphorylates the repetitive C-terminus of RNA polymerase II. This chain is Cyclin-dependent kinase 2 homolog, found in Plasmodium yoelii yoelii.